The primary structure comprises 229 residues: Complex I assembly factor TMEM126B, mitochondrial (229 aa).

4 helical membrane passes run 71-91 (IRGT…ANLV), 109-129 (LTTL…TDAL), 140-160 (VLRS…ALAF), and 198-218 (VPLL…YAVC).

Part of the mitochondrial complex I assembly/MCIA complex that comprises at least the core subunits TMEM126B, NDUFAF1, ECSIT and ACAD9 and complement subunits such as COA1 and TMEM186. Associates with the intermediate 370 kDa subcomplex of incompletely assembled complex I. Interacts with TMEM70.

The protein resides in the mitochondrion membrane. Functionally, as part of the MCIA complex, involved in the assembly of the mitochondrial complex I. Participates in constructing the membrane arm of complex I. This Rattus norvegicus (Rat) protein is Complex I assembly factor TMEM126B, mitochondrial.